Consider the following 269-residue polypeptide: Putative phosphoenolpyruvate synthase regulatory protein (269 aa).

149-156 (GVSRSGKT) contacts ADP.

It belongs to the pyruvate, phosphate/water dikinase regulatory protein family. PSRP subfamily.

The catalysed reaction is [pyruvate, water dikinase] + ADP = [pyruvate, water dikinase]-phosphate + AMP + H(+). It catalyses the reaction [pyruvate, water dikinase]-phosphate + phosphate + H(+) = [pyruvate, water dikinase] + diphosphate. Its function is as follows. Bifunctional serine/threonine kinase and phosphorylase involved in the regulation of the phosphoenolpyruvate synthase (PEPS) by catalyzing its phosphorylation/dephosphorylation. The chain is Putative phosphoenolpyruvate synthase regulatory protein from Colwellia psychrerythraea (strain 34H / ATCC BAA-681) (Vibrio psychroerythus).